Consider the following 186-residue polypeptide: Ribosome-recycling factor (186 aa).

The protein belongs to the RRF family.

The protein resides in the cytoplasm. Functionally, responsible for the release of ribosomes from messenger RNA at the termination of protein biosynthesis. May increase the efficiency of translation by recycling ribosomes from one round of translation to another. The polypeptide is Ribosome-recycling factor (Pediococcus pentosaceus (strain ATCC 25745 / CCUG 21536 / LMG 10740 / 183-1w)).